Consider the following 91-residue polypeptide: MAVKIRLTRLGSKRNPFYRIVVADARSPRDGRIIEQIGTYNPASVNAPEVKIDEELALKWLKDGAKPTDTVHNILSKQGILKTFDEQKHAK.

This sequence belongs to the bacterial ribosomal protein bS16 family.

This is Small ribosomal subunit protein bS16 from Staphylococcus haemolyticus (strain JCSC1435).